The sequence spans 290 residues: Mitochondrial dicarboxylate carrier (290 aa).

Solcar repeat units lie at residues 6-90, 101-188, and 197-281; these read TKRL…VKKQ, QKAL…IKQT, and DNLQ…LRLK. 3 helical membrane passes run 12–32, 65–84, and 103–123; these read WYFGGVAGAMAACCTHPLDLL, GVSASVLRQLTYSTTRFGIY, and ALLAGFAGACGGMVGTPGDLV. Lysine 159 carries the post-translational modification N6-acetyllysine. 3 consecutive transmembrane segments (helical) span residues 163–182, 203–223, and 256–276; these read GATMATSRAILMTIGQLSFY, FASSISAASVATVMTQPLDVM, and GFIPAWARLAPHTVLTFIFFE.

Belongs to the mitochondrial carrier (TC 2.A.29) family.

The protein resides in the mitochondrion inner membrane. It carries out the reaction (S)-malate(in) + phosphate(out) = (S)-malate(out) + phosphate(in). It catalyses the reaction malonate(out) + (S)-malate(in) = malonate(in) + (S)-malate(out). The catalysed reaction is (S)-malate(in) + succinate(out) = (S)-malate(out) + succinate(in). The enzyme catalyses (S)-malate(in) + sulfate(out) = (S)-malate(out) + sulfate(in). It carries out the reaction 2 thiosulfate(out) + (S)-malate(in) = 2 thiosulfate(in) + (S)-malate(out). It catalyses the reaction malonate(out) + phosphate(in) = malonate(in) + phosphate(out). The catalysed reaction is succinate(out) + phosphate(in) = succinate(in) + phosphate(out). The enzyme catalyses sulfate(out) + phosphate(in) = sulfate(in) + phosphate(out). It carries out the reaction 2 thiosulfate(out) + phosphate(in) = 2 thiosulfate(in) + phosphate(out). It catalyses the reaction malonate(out) + succinate(in) = malonate(in) + succinate(out). Functionally, catalyzes the electroneutral exchange or flux of physiologically important metabolites such as dicarboxylates (malonate, malate, succinate), inorganic sulfur-containing anions, and phosphate, across mitochondrial inner membrane. Plays an important role in gluconeogenesis, fatty acid metabolism, urea synthesis, and sulfur metabolism, by supplying the substrates for the different metabolic processes. This chain is Mitochondrial dicarboxylate carrier, found in Caenorhabditis elegans.